The following is a 222-amino-acid chain: Acyl-protein thioesterase 1 homolog 2 (222 aa).

Residues S116, D169, and H202 each act as charge relay system in the active site.

This sequence belongs to the AB hydrolase superfamily. AB hydrolase 2 family.

It is found in the cytoplasm. Its subcellular location is the nucleus. It catalyses the reaction S-hexadecanoyl-L-cysteinyl-[protein] + H2O = L-cysteinyl-[protein] + hexadecanoate + H(+). Hydrolyzes fatty acids from S-acylated cysteine residues in proteins with a strong preference for palmitoylated G-alpha proteins over other acyl substrates. Mediates the deacylation of G-alpha proteins such as GPA1 in vivo, but has weak or no activity toward palmitoylated Ras proteins. Has weak lysophospholipase activity in vitro; however such activity may not exist in vivo. The sequence is that of Acyl-protein thioesterase 1 homolog 2 from Dictyostelium discoideum (Social amoeba).